A 1822-amino-acid chain; its full sequence is MDSGMEEEGALPGTLSGCSGLHPVLPSDLDVISDTSGLGNGVLPSMSEEKVSPTRARNMKDFENQITELKKENFNLKLRIYFLEERIQQEFAGPTEHIYKTNIELKVEVESLKRELQEKDQLLVKASKAVESLAERGGSEVQRVKEDARKKVQQVEDLLTKRIHLLEEDVKAAQAELEKAFAGTETEKALRLSLESKLSAMKKMQEGDLEMTLALEEKDRLIEELKLSLKSKEALIQCLKEEKSQMASPDENVSSGELRGLSATLREEKERDAEEWQKERNHFEERIQALQEDLREKEREIATEKKNNLKSYKAIQGLTMALKSKEREVEELDSKIKEVTTDSTKGREDPLKTQIPRFQLREGSEDCEAALVEKEALLAKLHSENVTKSTENHRLLRNVKKVTQELNDLKKEKLRLEQALEEAHQEGNRGARTIHDLRNEVEKLRKEVSEREKAVEKHYKSLPGESKTKFHTQEQVVRSLTGSGSQEDLLLQKSNEKDLEAIQQNCYLMTAEELKFGSDGLITEKCSQQSPDSKLIFSKEKQQSEYEGLTGDLKAEQNIYAHLAKTQDTDSVSNLQAELKEVLALRKQLEQDVLAYRNLQKALQEQLSEIRSREEEPFSFYSDQTSYLSICLEEHNQFQLEHFSQEELKKKVSDLIQLVKDLHTDNQHLKKTIFDLSSVGFQGSDRLELTKQEELVASKEDEDTLKFEADVETPFQSDQHLEQSREIMEDYAEGGCKSGYGRHMDSNILGHDGAQTPGASEEHTLEDELLGLLATLFSKKATPLLESRPDLLKALGALLLERICLAEQGRPGDHLDSKTEKALQQVAVQLRDELGHSFPANSFSKSYNEVKSMWGNWLVKTGDEDTVELKSVSVQTMAIEDTPHGFKPQSKRDAWAEKQEEAIFSTELESEALGEMPGQQATHLSFPSAINPDAEKTGLLIQLKTPELLENLYNLPASPEVVVAQLQGQVLELQRELKEFKTRNKQLHEKLILAEAMMEGLPVPNSALVNVPAAQAVVRTAFQDNPGEQEGPETTQSAGRDKDMDSDQYTSFEIDSEICPPDDLALLPACKENLEDLLGPSSIATYLDSKSQLSVKVSVNGTDQSENINIPDDTEDLKQKIHDLQTELEGYRNIIVQLLKHSQCSEAIITVLCGTEGAQDGLNKPKGHIDEEEMTFSSLHQVRYVKHMKILRPLTPEMIDGKMLESLKQQLVDQEQELQKEQDLNLELFGEIHDLQNKFQDLSPSRYDSLVQSQARELSLQRQQIKDSHGICVIYRQHMSTMIKAFEELLQASDVDSCVAEGFREQLTQCAGLLEQLERLFLHGKSARVEPHPQNELLKGLRTVEGNLPYHHLLPESPEPSASHALSDDEMSEKSFLSRDPKPDSDTEKYPAMASHFPQDLLMEHIQEIRTLRKHLEESIKTNEKLRKQLERQGSETDQGSRNVSACGLALHSSLTSEIHFLRKQNEALSMMLEKGSKDKQKESEKLRESLARKAESLEQLQLEYTSVREENERLQRDIIEKERHNQELTEEVCSSRQELSRVQEEAKSRQQLLSQKDKLLQSLQMELKVYEKLAEEHPRLQQDGSKCPEASDNSFDLFESTQAMAPKSASETPLLSGTDVDSLSCDSTSSATSPTSMPCLVAGHHMWASKSGHHMLGLIEDYDALYKQISWGQTLLAKMDVQTQEALSPTSHKLGPKGSSSVPLSKFLSSMNTAKLVLEKASRLLKLFWRVSVPTNGQCSLHCEQIGEMKAENTKLHKKLFEQEKKLQNTAKLLQQSKHQEKVIFDQLVITHQVLRKARGNLELRPGATRPGASSPSRPGS.

Residues 50–93 are CM1 motif; interacts with the gTuRC; that stretch reads KVSPTRARNMKDFENQITELKKENFNLKLRIYFLEERIQQEFAG. Residues 57-195 are interaction with NCKAP5L; that stretch reads RNMKDFENQI…TEKALRLSLE (139 aa). Residues serine 485 and serine 544 each carry the phosphoserine modification. Residues 1022 to 1046 form a disordered region; sequence FQDNPGEQEGPETTQSAGRDKDMDS. Phosphothreonine is present on threonine 1195. An interaction with PCNT and AKAP9 region spans residues 1201–1822; it reads GKMLESLKQQ…GASSPSRPGS (622 aa). Serine 1243 and serine 1245 each carry phosphoserine. The disordered stretch occupies residues 1350-1391; it reads YHHLLPESPEPSASHALSDDEMSEKSFLSRDPKPDSDTEKYP. Positions 1372-1389 are enriched in basic and acidic residues; that stretch reads SEKSFLSRDPKPDSDTEK. A phosphoserine mark is found at serine 1497, serine 1592, and serine 1595. The interval 1655-1697 is interaction with CDK5R1; it reads HMLGLIEDYDALYKQISWGQTLLAKMDVQTQEALSPTSHKLGP. The interval 1655–1822 is required for centrosomal attachment, Golgi targeting and CALM1 interaction; it reads HMLGLIEDYD…GASSPSRPGS (168 aa). The tract at residues 1688-1822 is interaction with PCNT; it reads LSPTSHKLGP…GASSPSRPGS (135 aa). The segment at 1790–1799 is required for centrosomal attachment, Golgi localization and CALM1 interaction; sequence VITHQVLRKA. Serine 1822 carries the phosphoserine modification.

In terms of assembly, homodimer. Interacts with CDK5R1 (p35 form). CDK5RAP1, CDK5RAP2 and CDK5RAP3 show competitive binding to CDK5R1. May form a complex with CDK5R1 and CDK5. Interacts with pericentrin/PCNT; the interaction is leading to centrosomal and Golgi localization of CDK5RAP2 and PCNT. Interacts with AKAP9; the interaction targets CDK5RAP2 and AKAP9 to Golgi apparatus. Interacts with TUBG1; the interaction is leading to the centrosomal localization of CDK5RAP2 and TUBG1. Interacts with TUBGCP3. Interacts with CALM1. Interacts with CDC20. Interacts with CEP68; degradation of CEP68 in early mitosis leads to removal of CDK5RAP2 from the centrosome which promotes centriole disengagement and subsequent centriole separation. Interacts with NCKAP5L. Interacts with LGALS3BP; this interaction may connect the pericentrosomal complex to the gamma-tubulin ring complex (gTuRC) to promote microtubule assembly and acetylation. Contrary to human, chimpanzee, bovine and dog orthologous proteins, does not interact with EB1/MAPRE1, possibly due to a divergence at the level of the critical residue 939, which is a proline in MAPRE1-binding orthologs and a leucine in mouse and rat. Interacts with CCDC66. Associates (via CM1 motif) with TUBGCP2 of the gTuRC; the interaction plays a role in gTuRC activation. Phosphorylated in vitro by CDK5. In terms of tissue distribution, expressed in testis, thymus, heart and brain.

The protein localises to the cytoplasm. Its subcellular location is the cytoskeleton. It is found in the microtubule organizing center. It localises to the centrosome. The protein resides in the golgi apparatus. In terms of biological role, potential regulator of CDK5 activity via its interaction with CDK5R1. Negative regulator of centriole disengagement (licensing) which maintains centriole engagement and cohesion. Involved in regulation of mitotic spindle orientation. Plays a role in the spindle checkpoint activation by acting as a transcriptional regulator of both BUBR1 and MAD2 promoter. Together with EB1/MAPRE1, may promote microtubule polymerization, bundle formation, growth and dynamics at the plus ends. Regulates centrosomal maturation by recruitment of the gamma-tubulin ring complex (gTuRC) onto centrosomes. Required for the recruitment of AKAP9 to centrosomes. Plays a role in neurogenesis. Contrary to higher mammalian orthologs, including human, chimpanzee, bovine and dog, does not interact with EB1/MAPRE1, therefore its function in the regulation of microtubule dynamics is unclear. This chain is CDK5 regulatory subunit-associated protein 2 (Cdk5rap2), found in Mus musculus (Mouse).